The following is a 291-amino-acid chain: Phycobilisome 32.1 kDa linker polypeptide, phycocyanin-associated, rod 1 (291 aa).

The 178-residue stretch at alanine 2–arginine 179 folds into the PBS-linker domain. In terms of domain architecture, CpcD-like spans serine 236–alanine 288.

Belongs to the phycobilisome linker protein family. In terms of assembly, part of 2 PBS rod complexes, the conventional CpcG-PBS rod and a photosystem I-specific CpcL-PBS rod, both of which include ferredoxin--NADP reductase (petH). CpcG-PBS has on average 3 stacked phycocyanin hexamers (PC, CpcA and CpcB). Linker CpcG connects the PC stack to the thylakoid, the hexamers are linked by 1 copy of CpcC1, 1 copy of CpcC2 and the stack is terminated by a single copy of CpcD. The CpcL-PBS has on average 5 stacked phycocyanin hexamers (PC, CpcA and CpcB). Linker CpcL connects the PC stack to the thylakoid, the hexamers are linked by 1 copy of CpcC1, 3 copies of CpcC2 and the stack is terminated by a single copy of CpcD.

The protein resides in the cellular thylakoid membrane. In terms of biological role, rod linker protein, connecting hexameric phycocyanin (PC, made by cpcA and cpcB) rods in the phycobilisome (PBS). PC is the major phycobiliprotein in PBS rods. Linker polypeptides determine the state of aggregation and the location of the disk-shaped phycobiliprotein units within the phycobilisome and modulate their spectroscopic properties in order to mediate a directed and optimal energy transfer. The protein is Phycobilisome 32.1 kDa linker polypeptide, phycocyanin-associated, rod 1 (cpcC1) of Synechocystis sp. (strain ATCC 27184 / PCC 6803 / Kazusa).